Reading from the N-terminus, the 945-residue chain is MYGAGGGRAKPERKGGVKEEAGPGGTGTGGNRVELLVFGYACKLFRDDERALAQEQGQHLIPWMGDPKILIDRYDGRGHLHDLSAYDAEYATWNRDYQLSEEEARVEALCDEERYLALHTDLLEEEARQEEEYKRLSEALAEDGNYSAVGFTYGSDYYDPSEPTEEEEPSKQREKNEAENLEENEEPFIAPLGLSVPSDVELPPTAKMHAIIERTANFVCKQGAQFEIMLKAKQARNSQFDFLRFDHYLNPYYKFIQKAMKEGRYTVLAESKNEEKKKSGPTSDNEEEDDEEDGSYLHPSLFASKKSSRLEELMKPLKVVDPDHPLAALVRKAQADSSAPAPPTADGTPAQPSQVEYTADSTVAAMYYSYYMLPDGTYCLAPPPPGIDVATYYSTLPAGVTVSSSPGVTTTVPPPPGTTPPPPPTTAEPSSGVTSTTTTTSALAPVAIIPPPPDIQPVIDKLAEYVARNGLKFETSVRAKNDQRFEFLQPWHQYNAYYEFKKQFFLQKEGGGSTQAASTAEEAPTETAVEESGEAGEDGAPEGMAETGGRGSGKKEAGSSKSTVDGKLVKASFAPISFAIKAKENDLLPLEKNRVKLDDDSEEDEESRECQESTSSVANPSPAAAPPSVAVEEKKPQLTQEELEAKQAKQKLEDRLAAAAREKLAQASKESKEKQLQAERKRKAALFLQTLKNPLPEAEVGKLEESTFGVEDTGVMPCPLLVGGRTLPILEGKPPERPSNRCRDPPREEEREKKKKKHKKRSRTRSRSPKYHSSSKPRSRSHSKAKHSLPSAYRTVRRSRSRSRSPRRRAHSPERRREERSVPTAYRMSGSPGVSRKRTRSRSPHEKKKKRRSRSRTKAKARSQSTSPSKQAAQRPSAHSAHSASISPVESRGSSQERSRGVSQEKDGQISSAIVSSVQSKITQDLMAKVRAMLAASKNLQTSAS.

Disordered stretches follow at residues 1-28 (MYGA…GTGT) and 156-185 (DYYD…EENE). Basic and acidic residues-rich tracts occupy residues 9 to 21 (AKPE…KEEA) and 169 to 178 (PSKQREKNEA). The SURP motif 1 repeat unit spans residues 211-253 (IIERTANFVCKQGAQFEIMLKAKQARNSQFDFLRFDHYLNPYY). The interval 271–301 (SKNEEKKKSGPTSDNEEEDDEEDGSYLHPSL) is disordered. Serine 283 carries the post-translational modification Phosphoserine. Over residues 284–294 (DNEEEDDEEDG) the composition is skewed to acidic residues. At lysine 315 the chain carries N6-acetyllysine. 2 disordered regions span residues 332–355 (KAQA…PSQV) and 403–448 (SSSP…PVAI). Positions 335 to 352 (ADSSAPAPPTADGTPAQP) are enriched in low complexity. Positions 412 to 426 (VPPPPGTTPPPPPTT) are enriched in pro residues. The segment covering 427–447 (AEPSSGVTSTTTTTSALAPVA) has biased composition (low complexity). Residues 458–498 (VIDKLAEYVARNGLKFETSVRAKNDQRFEFLQPWHQYNAYY) form an SURP motif 2 repeat. 3 disordered regions span residues 512–564 (GSTQ…KSTV), 589–680 (PLEK…QAER), and 712–921 (DTGV…VQSK). Residues 514 to 527 (TQAASTAEEAPTET) show a composition bias toward low complexity. Residues 528–540 (AVEESGEAGEDGA) are compositionally biased toward acidic residues. The span at 589 to 598 (PLEKNRVKLD) shows a compositional bias: basic and acidic residues. Residues serine 601 and serine 621 each carry the phosphoserine modification. The segment covering 615–630 (SSVANPSPAAAPPSVA) has biased composition (low complexity). Positions 632-686 (EEKKPQLTQEELEAKQAKQKLEDRLAAAAREKLAQASKESKEKQLQAERKRKAAL) form a coiled coil. Position 639 is a phosphothreonine (threonine 639). Basic and acidic residues-rich tracts occupy residues 643-679 (LEAK…LQAE) and 733-752 (KPPE…EERE). Basic residues-rich tracts occupy residues 753-787 (KKKK…KAKH) and 795-810 (TVRR…RRRA). The span at 811-821 (HSPERRREERS) shows a compositional bias: basic and acidic residues. Residues serine 829 and serine 831 each carry the phosphoserine modification. The span at 835–861 (SRKRTRSRSPHEKKKKRRSRSRTKAKA) shows a compositional bias: basic residues. Over residues 871 to 894 (QAAQRPSAHSAHSASISPVESRGS) the composition is skewed to low complexity. The segment covering 895 to 908 (SQERSRGVSQEKDG) has biased composition (basic and acidic residues). Phosphoserine is present on residues serine 899 and serine 903. A compositionally biased stretch (low complexity) spans 909 to 920 (QISSAIVSSVQS).

The protein resides in the nucleus. Functionally, plays a role as an alternative splicing regulator. Regulates its own expression at the level of RNA processing. Also regulates the splicing of fibronectin and CD45 genes. May act, at least in part, by interaction with other R/S-containing splicing factors. Represses the splicing of MAPT/Tau exon 10. The chain is Splicing factor, suppressor of white-apricot homolog (Sfswap) from Mus musculus (Mouse).